A 224-amino-acid chain; its full sequence is Mammalian ependymin-related protein 1 (224 aa).

A signal peptide spans 1-37 (MPGRAPLRTVPGALGAWLLGGLWAWTLCGLCSLGAVG). 3 disulfides stabilise this stretch: C42-C172, C88-C222, and C113-C210. 2 N-linked (GlcNAc...) asparagine glycosylation sites follow: N130 and N182.

Belongs to the ependymin family. Homodimer. Post-translationally, N-glycosylated; the glycan contains mannose-6-phosphate moieties. As to expression, ubiquitous. Detected in brain, heart, skeletal muscle, kidney, testis, ovary and prostate.

Its subcellular location is the lysosome lumen. The protein localises to the secreted. In terms of biological role, binds anionic lipids and gangliosides at acidic pH. The polypeptide is Mammalian ependymin-related protein 1 (EPDR1) (Homo sapiens (Human)).